A 1124-amino-acid polypeptide reads, in one-letter code: Regulator of nonsense transcripts 1 (1124 aa).

A sufficient for interaction with RENT2 region spans residues 1–410 (MSVEAYGPSS…LRSSVGAPVE (410 aa)). A phosphoserine mark is found at serine 10 and serine 31. Residues 39–69 (TLPSQTQTPPGGPGGAGGPGGAGAGGAAGQL) are disordered. Residues 51–66 (PGGAGGPGGAGAGGAA) are compositionally biased toward gly residues. The Upf1 CH-rich domain maps to 110–267 (TKDLPVHACS…NKLEELWKEN (158 aa)). 12 residues coordinate Zn(2+): cysteine 118, cysteine 121, cysteine 132, serine 135, cysteine 140, histidine 150, histidine 154, cysteine 160, cysteine 178, cysteine 181, cysteine 204, and cysteine 208. The tract at residues 118–150 (CSYCGIHDPACVVYCNTSKKWFCNGRGNTSGSH) is C3H. Residues 132-160 (CNTSKKWFCNGRGNTSGSHIVNHLVRAKC) form a CC/SHH/C region. The segment at 178–208 (CYNCGCRNVFLLGFIPAKADSVVVLLCRQPC) is C4. Residues glutamine 481 and 501 to 505 (GTGKT) contribute to the ATP site. The residue at position 560 (serine 560) is a Phosphoserine. Positions 671, 708, and 839 each coordinate ATP. At serine 951 the chain carries Phosphoserine. 2 disordered regions span residues 1004–1053 (FGQA…VASQ) and 1066–1091 (SMSQ…YLGD). Arginine 1014 is modified (omega-N-methylarginine). Basic residues predominate over residues 1020–1029 (KTGRGGRQKN). The span at 1036-1053 (PSQTTLPNSQASQDVASQ) shows a compositional bias: polar residues. Positions 1066 to 1081 (SMSQPSQMSQPGLSQP) are enriched in low complexity. Phosphoserine is present on residues serine 1084, serine 1102, serine 1105, and serine 1122. 2 short sequence motifs ([ST]-Q motif) span residues 1084–1085 (SQ) and 1102–1103 (SQ). Positions 1105–1124 (STYQGERAYQHGGVTGLSQY) are disordered.

Belongs to the DNA2/NAM7 helicase family. In terms of assembly, found in a post-splicing messenger ribonucleoprotein (mRNP) complex. Associates with the exon junction complex (EJC). Associates with the SGM1C complex; is phosphorylated by the complex kinase component SGM1. Part of a complex composed of SMG1, DHX34 and UPF1; within the complex DHX34 acts as a scaffolding protein to facilitate SMG1 phosphorylation of UPF1. Interacts with UPF2. Interacts with UPF3A and UPF3B. Interacts with EST1A. Interacts with SLBP. Interacts (when hyperphosphorylated) with PNRC2. Interacts with AGO1 and AGO2. Interacts with GSPT2. Interacts with isoform 1 and isoform 5 of ADAR/ADAR1. Interacts with SMG7. Interacts with ZC3H12A; this interaction occurs in a mRNA translationally active- and termination-dependent manner and is essential for ZC3H12A-mediated degradation of target mRNAs. Interacts with CPSF6. Interacts with MOV10; the interaction is direct and RNA-dependent. Interacts with SHFL; the interaction increases in the presence of RNA. Interacts with UPF2 and DDX4; interactions are mediated by TDRD6. Interacts with DHX34 and PABPC1/PABP1; the interactions are RNA-independent. Interacts with RBM46. Post-translationally, phosphorylated by SMG1; required for formation of mRNA surveillance complexes. Localizes in male germ cells.

It localises to the cytoplasm. Its subcellular location is the P-body. The protein resides in the nucleus. The protein localises to the perinuclear region. It catalyses the reaction ATP + H2O = ADP + phosphate + H(+). RNA-dependent helicase required for nonsense-mediated decay (NMD) of aberrant mRNAs containing premature stop codons and modulates the expression level of normal mRNAs. Is recruited to mRNAs upon translation termination and undergoes a cycle of phosphorylation and dephosphorylation; its phosphorylation appears to be a key step in NMD. Recruited by release factors to stalled ribosomes together with the SMG1C protein kinase complex to form the transient SURF (SMG1-UPF1-eRF1-eRF3) complex. In EJC-dependent NMD, the SURF complex associates with the exon junction complex (EJC) (located 50-55 or more nucleotides downstream from the termination codon) through UPF2 and allows the formation of an UPF1-UPF2-UPF3 surveillance complex which is believed to activate NMD. Phosphorylated UPF1 is recognized by EST1B/SMG5, SMG6 and SMG7 which are thought to provide a link to the mRNA degradation machinery involving exonucleolytic and endonucleolytic pathways, and to serve as adapters to protein phosphatase 2A (PP2A), thereby triggering UPF1 dephosphorylation and allowing the recycling of NMD factors. UPF1 can also activate NMD without UPF2 or UPF3, and in the absence of the NMD-enhancing downstream EJC indicative for alternative NMD pathways. Plays a role in replication-dependent histone mRNA degradation at the end of phase S; the function is independent of UPF2. For the recognition of premature termination codons (PTC) and initiation of NMD a competitive interaction between UPF1 and PABPC1 with the ribosome-bound release factors is proposed. The ATPase activity of UPF1 is required for disassembly of mRNPs undergoing NMD. Together with UPF2 and dependent on TDRD6, mediates the degradation of mRNA harboring long 3'UTR by inducing the NMD machinery. Also capable of unwinding double-stranded DNA and translocating on single-stranded DNA. The protein is Regulator of nonsense transcripts 1 of Mus musculus (Mouse).